Reading from the N-terminus, the 183-residue chain is Dual-action ribosomal maturation protein DarP (183 aa).

This sequence belongs to the DarP family.

The protein resides in the cytoplasm. Functionally, member of a network of 50S ribosomal subunit biogenesis factors which assembles along the 30S-50S interface, preventing incorrect 23S rRNA structures from forming. Promotes peptidyl transferase center (PTC) maturation. This is Dual-action ribosomal maturation protein DarP from Escherichia coli O6:H1 (strain CFT073 / ATCC 700928 / UPEC).